The following is a 32-amino-acid chain: Cyclotide Hyfl-B (32 aa).

A cross-link (cyclopeptide (Gly-Asn)) is located at residues 1 to 32 (GSPIQCAETCFIGKCYTEELGCTCTAFLCMKN). Cystine bridges form between cysteine 6-cysteine 22, cysteine 10-cysteine 24, and cysteine 15-cysteine 29.

It belongs to the cyclotide family. Moebius subfamily. In terms of processing, this is a cyclic peptide.

Its function is as follows. Probably participates in a plant defense mechanism. This chain is Cyclotide Hyfl-B, found in Hybanthus floribundus (Greenviolet).